We begin with the raw amino-acid sequence, 48 residues long: Large ribosomal subunit protein bL33A (48 aa).

Belongs to the bacterial ribosomal protein bL33 family.

The chain is Large ribosomal subunit protein bL33A from Limosilactobacillus fermentum (strain NBRC 3956 / LMG 18251) (Lactobacillus fermentum).